The primary structure comprises 380 residues: MAPNIRKHHPLLKMINNSLIDLPTPSNISAWWNFGSLLGICLITQILTGLLLAAHYTADTTLAFSSVAHTCRNVQYGWLIRNLHANGASFFFICIYLHIGRGFYYGSYLFKETWNTGVTLLLTLMATAFVGYVLPWGQMSFWGATVITNLFSAIPYIGQTLVEWAWGGFSVDNPTLTRFFALHFLLPFMIAGLTLIHLTFLHESGSNNPLGIVSNSDKIPFHPYFSLKDILGFAIMLLLLTTLALFSPNLLGDPENFTPANPLVTPPHIKPEWYFLFAYAILRSIPNKLGGVLALAASVLILFLTPFLHKSKQRTMTFRPLSQLLFWLLVANLLILTWVGSQPVEHPFIIIGQMASITYFIIILVLFPMTSALENKMLNY.

4 helical membrane passes run 34–54 (FGSLLGICLITQILTGLLLAA), 78–99 (WLIRNLHANGASFFFICIYLHI), 114–134 (WNTGVTLLLTLMATAFVGYVL), and 179–199 (FFALHFLLPFMIAGLTLIHLT). Residues histidine 84 and histidine 98 each contribute to the heme b site. Heme b is bound by residues histidine 183 and histidine 197. Residue histidine 202 participates in a ubiquinone binding. A run of 4 helical transmembrane segments spans residues 227–247 (LKDILGFAIMLLLLTTLALFS), 289–309 (LGGVLALAASVLILFLTPFLH), 321–341 (LSQLLFWLLVANLLILTWVGS), and 348–368 (FIIIGQMASITYFIIILVLFP).

Belongs to the cytochrome b family. The cytochrome bc1 complex contains 11 subunits: 3 respiratory subunits (MT-CYB, CYC1 and UQCRFS1), 2 core proteins (UQCRC1 and UQCRC2) and 6 low-molecular weight proteins (UQCRH/QCR6, UQCRB/QCR7, UQCRQ/QCR8, UQCR10/QCR9, UQCR11/QCR10 and a cleavage product of UQCRFS1). This cytochrome bc1 complex then forms a dimer. It depends on heme b as a cofactor.

It localises to the mitochondrion inner membrane. In terms of biological role, component of the ubiquinol-cytochrome c reductase complex (complex III or cytochrome b-c1 complex) that is part of the mitochondrial respiratory chain. The b-c1 complex mediates electron transfer from ubiquinol to cytochrome c. Contributes to the generation of a proton gradient across the mitochondrial membrane that is then used for ATP synthesis. The polypeptide is Cytochrome b (MT-CYB) (Pharomachrus antisianus (Crested quetzal)).